The following is a 608-amino-acid chain: Chaperone protein HtpG (608 aa).

The a; substrate-binding stretch occupies residues 1 to 332 (MQFQTEVNQL…VEDLPLNVSR (332 aa)). A b region spans residues 333 to 536 (EILQENQILK…KNKPDFAMQQ (204 aa)). Residues 537-608 (LLKQMGQEQN…LTKIINKAFS (72 aa)) form a c region.

It belongs to the heat shock protein 90 family. In terms of assembly, homodimer.

It localises to the cytoplasm. Functionally, molecular chaperone. Has ATPase activity. This is Chaperone protein HtpG from Campylobacter jejuni subsp. jejuni serotype O:2 (strain ATCC 700819 / NCTC 11168).